Here is a 701-residue protein sequence, read N- to C-terminus: DNA ligase (701 aa).

Residues 43–47, 92–93, and E126 each bind NAD(+); these read DADYD and SL. Residue K128 is the N6-AMP-lysine intermediate of the active site. Residues R149, E186, K302, and K326 each contribute to the NAD(+) site. Residues C417, C420, C440, and C446 each coordinate Zn(2+). The 80-residue stretch at 622–701 folds into the BRCT domain; it reads ETGSPVTGKT…DEWLALIGET (80 aa).

Belongs to the NAD-dependent DNA ligase family. LigA subfamily. It depends on Mg(2+) as a cofactor. Mn(2+) serves as cofactor.

It catalyses the reaction NAD(+) + (deoxyribonucleotide)n-3'-hydroxyl + 5'-phospho-(deoxyribonucleotide)m = (deoxyribonucleotide)n+m + AMP + beta-nicotinamide D-nucleotide.. DNA ligase that catalyzes the formation of phosphodiester linkages between 5'-phosphoryl and 3'-hydroxyl groups in double-stranded DNA using NAD as a coenzyme and as the energy source for the reaction. It is essential for DNA replication and repair of damaged DNA. In Hyphomonas neptunium (strain ATCC 15444), this protein is DNA ligase.